A 208-amino-acid chain; its full sequence is Uracil phosphoribosyltransferase (208 aa).

5-phospho-alpha-D-ribose 1-diphosphate contacts are provided by residues Arg-78, Arg-103, and 130–138 (DPMLATGGS). Residues Ile-193 and 198 to 200 (GDA) contribute to the uracil site. Asp-199 lines the 5-phospho-alpha-D-ribose 1-diphosphate pocket.

This sequence belongs to the UPRTase family. Mg(2+) serves as cofactor.

It catalyses the reaction UMP + diphosphate = 5-phospho-alpha-D-ribose 1-diphosphate + uracil. It functions in the pathway pyrimidine metabolism; UMP biosynthesis via salvage pathway; UMP from uracil: step 1/1. Its activity is regulated as follows. Allosterically activated by GTP. Its function is as follows. Catalyzes the conversion of uracil and 5-phospho-alpha-D-ribose 1-diphosphate (PRPP) to UMP and diphosphate. The protein is Uracil phosphoribosyltransferase of Psychromonas ingrahamii (strain DSM 17664 / CCUG 51855 / 37).